The primary structure comprises 1366 residues: MAERTNLMFHNKVIGGTAIKRLISRLIDHFGMAYTSHILDQVKTLGFRQATATSISLGIDDLLTIPSKGWLVRDAEHQNLILEKQHHYGNVHAVEKLRQSIEIWYATSEYFRQEMNPNFRMTDPFNPVHIMSFSGARGNASQVHQLVGMRGLMSDPQGQMIDLPIQSNLREGLSLTEYIISCYGARKGVVDTAVRTSDAGYLTRRLVEVVQHIVIRRTDCGTIRGISVNTQNEMMPESTWTQTLIGRVLADDIYRGSRCIAVRNQDIGIGLFNQFKTFQTQPISIRTPFTCRNTSWICRLCYGQSPTQGHLVELGEAVGIIAGQSIGEPGTQLTLRTFHTGGVFTGGTAEQVRAPYNGKIKFNEDLVHPTRTRHGHPAFLCYIDLYVSIENGDIIHNVTIPPKSFLLVQNNQYVKSEQVIAEILAGTYTFNFKEKVRKHVYSDLEGEMHWSTNVYHASEFKYSNVHILPKTSHLWILSGKSDRSGSVSFSTRKDQDQLNIHSLSTGERDICNHLASNNKIRHKLFHFNPSEKKERRISDYSIINQIICIDHCHFTHPAIFHDTTDLLAKRRRNRFIIPFQFQSIQERDKALMLASSISIEIPINGLFRRNSIFAYFDDPQYRTQSSGITKYRTIDINYILKKEDFVIEYPGVKEFKTKYQMKVDQFFFIPEEVYILPEFSSIMVRNNSIVEVDTPITVNIRSQVSGLVRLEKKKKKIQLKIFSGNIYFPGEMDKISRHSAMLIPPRTVKKNSKGSKKKMKNWIYAQWITITKKKYFVLVRPVILYEIADRIKLIKFFSQDMLQERDNLELQVINYILSGNGKSIRGISNTSIQLVRTCLVLNWDQDKKVSSIEKGHASFVELSINGLVRYFLKIALVKSHISYIRKRNDPSGSRFILDNESDWTNINPFFSMNSREKVQQSLSQNHGTIHMLLNRNDKCRSLIILSSSNCFQIRSFHDGKYYKEEMNPIQRDPLIPIKNSLGPLGIALQVANLDFYLLITHNQISINKNGQLDKLKETFQVFKYYLIDENERIYKPDISSNILLNPFYLNWHFFHHNSCEKKTFPIISLGQFICENVCIVQMKNAPHLKSGQILTVQMDSVGIRSANPYLATPGTTVHGHYGEILSEGDILVTFIYQKSRSGDITQGLPKVEQVLEVRSIDSISINLEKRVGTWNGRITRILGIPWGFFISAELTIAQSRISLVNQIQKVYRSQGVHIHNRHIEIIVRQITSKVLVSEDGMSNVFLPGELIGLLRAERAGRSLEESICYRVLLLGITKTSLNTQSFISEASFQETARVLSKAALRGRIDWLKGLKENVVLGGMMPVGTGFKRIIYRSKQRQYNKITSETKKRIDMIYQSNLGFKNS.

The Zn(2+) site is built by C220, C291, C298, and C301.

This sequence belongs to the RNA polymerase beta' chain family. RpoC2 subfamily. In plastids the minimal PEP RNA polymerase catalytic core is composed of four subunits: alpha, beta, beta', and beta''. When a (nuclear-encoded) sigma factor is associated with the core the holoenzyme is formed, which can initiate transcription. Requires Zn(2+) as cofactor.

Its subcellular location is the plastid. The protein localises to the chloroplast. The enzyme catalyses RNA(n) + a ribonucleoside 5'-triphosphate = RNA(n+1) + diphosphate. Functionally, DNA-dependent RNA polymerase catalyzes the transcription of DNA into RNA using the four ribonucleoside triphosphates as substrates. The polypeptide is DNA-directed RNA polymerase subunit beta'' (Phaseolus vulgaris (Kidney bean)).